Here is a 276-residue protein sequence, read N- to C-terminus: 2,3,4,5-tetrahydropyridine-2,6-dicarboxylate N-succinyltransferase (276 aa).

2 residues coordinate substrate: Arg-107 and Asp-144.

It belongs to the transferase hexapeptide repeat family. In terms of assembly, homotrimer.

It is found in the cytoplasm. The enzyme catalyses (S)-2,3,4,5-tetrahydrodipicolinate + succinyl-CoA + H2O = (S)-2-succinylamino-6-oxoheptanedioate + CoA. It participates in amino-acid biosynthesis; L-lysine biosynthesis via DAP pathway; LL-2,6-diaminopimelate from (S)-tetrahydrodipicolinate (succinylase route): step 1/3. The chain is 2,3,4,5-tetrahydropyridine-2,6-dicarboxylate N-succinyltransferase from Gluconobacter oxydans (strain 621H) (Gluconobacter suboxydans).